The primary structure comprises 246 residues: Ribonuclease PH (246 aa).

A disordered region spans residues Asn-67 to Gly-87. Phosphate contacts are provided by residues Arg-88 and Gly-126–Arg-128.

This sequence belongs to the RNase PH family. In terms of assembly, homohexameric ring arranged as a trimer of dimers.

The enzyme catalyses tRNA(n+1) + phosphate = tRNA(n) + a ribonucleoside 5'-diphosphate. Its function is as follows. Phosphorolytic 3'-5' exoribonuclease that plays an important role in tRNA 3'-end maturation. Removes nucleotide residues following the 3'-CCA terminus of tRNAs; can also add nucleotides to the ends of RNA molecules by using nucleoside diphosphates as substrates, but this may not be physiologically important. Probably plays a role in initiation of 16S rRNA degradation (leading to ribosome degradation) during starvation. In Rhodopirellula baltica (strain DSM 10527 / NCIMB 13988 / SH1), this protein is Ribonuclease PH.